Reading from the N-terminus, the 565-residue chain is Glycine--tRNA ligase (565 aa).

Positions 98 and 164 each coordinate substrate. ATP-binding positions include 196-198 (RNE), 206-211 (IRLREF), 323-324 (EI), and 440-443 (GIDR). Residue 211–215 (FTQAE) participates in substrate binding. 436–440 (EPSFG) lines the substrate pocket.

This sequence belongs to the class-II aminoacyl-tRNA synthetase family.

Its subcellular location is the cytoplasm. It carries out the reaction tRNA(Gly) + glycine + ATP = glycyl-tRNA(Gly) + AMP + diphosphate. Functionally, catalyzes the attachment of glycine to tRNA(Gly). This Methanothermobacter thermautotrophicus (strain ATCC 29096 / DSM 1053 / JCM 10044 / NBRC 100330 / Delta H) (Methanobacterium thermoautotrophicum) protein is Glycine--tRNA ligase.